The following is a 245-amino-acid chain: MLIIPAIDLKDGACVRLRQGRMEDSTVFSDDPVSMAAKWVEGGCRRLHLVDLNGAFEGQPVNGEVVTAIAKRYPNLPIQIGGGIRSLETIEHYVKAGVSYVIIGTKAVKQPEFVAEACKAFPGKVIVGLDAKDGFVATDGWAEVSSVQVIDLARRFEADGVSAIVYTDIAKDGMMQGCNVPFTKALAEATRIPVIASGGIHNLGDIKALLDAKAPGIIGAITGRAIYEGTLDVAEAQAFCDNYQG.

The active-site Proton acceptor is aspartate 8. Aspartate 130 functions as the Proton donor in the catalytic mechanism.

Belongs to the HisA/HisF family.

The protein resides in the cytoplasm. The enzyme catalyses 1-(5-phospho-beta-D-ribosyl)-5-[(5-phospho-beta-D-ribosylamino)methylideneamino]imidazole-4-carboxamide = 5-[(5-phospho-1-deoxy-D-ribulos-1-ylimino)methylamino]-1-(5-phospho-beta-D-ribosyl)imidazole-4-carboxamide. It functions in the pathway amino-acid biosynthesis; L-histidine biosynthesis; L-histidine from 5-phospho-alpha-D-ribose 1-diphosphate: step 4/9. The chain is 1-(5-phosphoribosyl)-5-[(5-phosphoribosylamino)methylideneamino] imidazole-4-carboxamide isomerase from Pseudomonas putida (strain ATCC 700007 / DSM 6899 / JCM 31910 / BCRC 17059 / LMG 24140 / F1).